A 25-amino-acid chain; its full sequence is Large ribosomal subunit protein uL30 (25 aa).

It belongs to the universal ribosomal protein uL30 family. As to quaternary structure, part of the 50S ribosomal subunit.

This chain is Large ribosomal subunit protein uL30 (rpmD), found in Pseudomonas putida (Arthrobacter siderocapsulatus).